The following is a 404-amino-acid chain: MEPIPNDLILEIFSRLPAKSVIGFRTLSKHWASILRSPVFTELFLTRSSNRPRLLFAAERNGEWLFFSSPQPQNRYEKSSHLDYHTKFSGDVSRFICSYVSGLLCFPDLWLSKDASPVICNPTTGMYESLPDLMRYKNARGFLGFDPIGKQFKVLSEAYPFSDQREHHEILTLGTEELSWRSNIISCPAYDRSLSEGICINGVLYYLAQTLGVPSCVIICFDVRSEEFKYFDAGCFNDQLDDTSGLILVNYEGKLSGINWKYGQAGERRTVELRMWVLEDAEKHEWVKYVYTLPENEVLDSCDFSVAGVTTRGDIVLCMKYTCKPFYVFYFNPERNTLQSVEIQDFGANLEAVENCGRVYAFVNHVEDLRVNKGKQLKSSISQVKHLCSCCNKVSQPDYHYQKA.

The 47-residue stretch at 1 to 47 (MEPIPNDLILEIFSRLPAKSVIGFRTLSKHWASILRSPVFTELFLTR) folds into the F-box domain.

In Arabidopsis thaliana (Mouse-ear cress), this protein is F-box protein At3g57590.